The primary structure comprises 301 residues: NDP-polyphosphate phosphotransferase 3 (301 aa).

Residues 1–12 are compositionally biased toward basic and acidic residues; sequence MNRNGSTKDPRR. A disordered region spans residues 1–21; sequence MNRNGSTKDPRRMTGAATGEI.

It belongs to the polyphosphate kinase 2 (PPK2) family. Class I subfamily. Mg(2+) is required as a cofactor.

The catalysed reaction is [phosphate](n) + ATP = [phosphate](n+1) + ADP. The enzyme catalyses [phosphate](n) + CTP = [phosphate](n+1) + CDP. It carries out the reaction [phosphate](n) + GTP = [phosphate](n+1) + GDP. It catalyses the reaction [phosphate](n) + UTP = [phosphate](n+1) + UDP. Uses inorganic polyphosphate (polyP) as a donor to convert NDP to NTP. PolyP hydrolysis is slightly faster with UDP, but it can also use ADP, GDP and CDP. In Ruegeria pomeroyi (strain ATCC 700808 / DSM 15171 / DSS-3) (Silicibacter pomeroyi), this protein is NDP-polyphosphate phosphotransferase 3.